The chain runs to 3037 residues: Genome polyprotein (3037 aa).

Ser-2 is subject to N-acetylserine; by host. The interval 2 to 23 (STNPKPQRKTKRNTNRRPQDVK) is interaction with STAT1. The segment at 2–58 (STNPKPQRKTKRNTNRRPQDVKFPGGGQIVGGVYLLPRRGPRLGVRAARKTSERSQP) is interaction with EIF2AK2/PKR. The interaction with DDX3X stretch occupies residues 2–59 (STNPKPQRKTKRNTNRRPQDVKFPGGGQIVGGVYLLPRRGPRLGVRAARKTSERSQPR). The interval 2 to 75 (STNPKPQRKT…PKDRRSTGKS (74 aa)) is disordered. The Cytoplasmic portion of the chain corresponds to 2–168 (STNPKPQRKT…EDGINYATGN (167 aa)). 2 short sequence motifs (nuclear localization signal) span residues 5–13 (PKPQRKTKR) and 38–43 (PRRGPR). Positions 7–16 (PQRKTKRNTN) are enriched in basic residues. Positions 32 to 47 (GGVYLLPRRGPRLGVR) are enriched in low complexity. Phosphoserine; by host is present on Ser-53. 2 consecutive short sequence motifs (nuclear localization signal) follow at residues 58 to 64 (PRGRRQP) and 66 to 71 (PKDRRS). Ser-99 and Ser-116 each carry phosphoserine; by host. Residues 112 to 152 (PRHKSRNLGKVIDTLTCGFADLMGYIPVVGAPVGGVARALA) are important for endoplasmic reticulum and mitochondrial localization. Residues 122–173 (VIDTLTCGFADLMGYIPVVGAPVGGVARALAHGVRVLEDGINYATGNLPGCS) form an interaction with APOA2 region. An important for lipid droplets localization region spans residues 164–167 (YATG). A helical transmembrane segment spans residues 169–189 (LPGCSFSIFLLALLSCISVPV). Residues 178–191 (LLALLSCISVPVSA) constitute a propeptide, ER anchor for the core protein, removed in mature form by host signal peptidase. The Lumenal portion of the chain corresponds to 190 to 358 (SAVEVRNTSS…TGGHWGVMFG (169 aa)). 3 N-linked (GlcNAc...) asparagine; by host glycosylation sites follow: Asn-196, Asn-209, and Asn-234. The important for fusion stretch occupies residues 265-296 (IVMSATLCSALYVGDVCGALMIAAQVVVVSPQ). A glycan (N-linked (GlcNAc...) asparagine; by host) is linked at Asn-305. A helical transmembrane segment spans residues 359 to 379 (LAYFSMQGAWAKVVVILLLTA). The Lumenal segment spans residues 380–729 (GVEASTYTTG…WEWVVLLFLL (350 aa)). The segment at 385–412 (TYTTGAVVGRSTHLFTSMFSLGSQQRVQ) is HVR1. 3 N-linked (GlcNAc...) (high mannose) asparagine; by host glycosylation sites follow: Asn-417, Asn-423, and Asn-430. Intrachain disulfides connect Cys-429-Cys-554, Cys-452-Cys-459, Cys-488-Cys-496, and Cys-505-Cys-510. N-linked (GlcNAc...) asparagine; by host glycosylation is present at Asn-448. Positions 475-480 (EESVTN) are HVR2. The segment at 482 to 495 (ADMRPYCWHYPPRP) is CD81-binding 1. Asn-534 carries N-linked (GlcNAc...) asparagine; by host glycosylation. A CD81-binding 2 region spans residues 546–553 (PPKGAWFG). Asn-558 carries N-linked (GlcNAc...) asparagine; by host glycosylation. 4 disulfide bridges follow: Cys-566/Cys-571, Cys-585/Cys-589, Cys-601/Cys-624, and Cys-611/Cys-648. Residues Asn-627 and Asn-649 are each glycosylated (N-linked (GlcNAc...) (high mannose) asparagine; by host). A disulfide bridge links Cys-656 with Cys-681. Positions 664–675 (SQLSPLLHSTTE) are PKR/eIF2-alpha phosphorylation homology domain (PePHD). The chain crosses the membrane as a helical span at residues 730-750 (LADARVCACLWMLLLLGQAEA). Residues 751–761 (ALEKLVILHAA) are Lumenal-facing. The helical transmembrane segment at 762 to 782 (SAASSNGLLYFILFFVAAWCI) threads the bilayer. The Cytoplasmic portion of the chain corresponds to 783–786 (KGRA). The chain crosses the membrane as a helical span at residues 787-807 (VPMVTYTLLGCWSFVLLLMAL). Topologically, residues 808–817 (PHQAYALDAA) are lumenal. The chain crosses the membrane as a helical span at residues 818 to 838 (EQGQIGMALLIAITAFTITPA). Residues 839–885 (YKILLSRCLWWTCYMLVLAEALIQDWIPPLQARGGRDGVIWAMTMFY) are Cytoplasmic-facing. Residues 886-906 (PGVVFDITKWLLAILGPGYLF) traverse the membrane as a helical segment. A Peptidase C18 domain is found at 905–1030 (LFRAAVMRTP…GYTSKGWRLL (126 aa)). Residues 907 to 932 (RAAVMRTPYFVRANALLRMCALVKQL) are Lumenal-facing. The segment at 908–1210 (AAVMRTPYFV…PVESLDVVTR (303 aa)) is protease NS2-3. Cys-926 carries S-palmitoyl cysteine; by host lipidation. The chain crosses the membrane as a helical span at residues 933-953 (AGGKYVQVALITLGKWTGTYI). Positions 933–953 (AGGKYVQVALITLGKWTGTYI) are interaction with host SCPS1. The Cytoplasmic segment spans residues 954 to 1661 (YDHLSPMSDW…CMQADLEIMT (708 aa)). Active-site for protease NS2 activity; shared with dimeric partner residues include His-956, Glu-976, and Cys-997. The 182-residue stretch at 1031-1212 (APITAYAQQT…ESLDVVTRSP (182 aa)) folds into the Peptidase S29 domain. Residues His-1087 and Asp-1111 each act as charge relay system; for serine protease NS3 activity in the active site. The Zn(2+) site is built by Cys-1127 and Cys-1129. The Charge relay system; for serine protease NS3 activity role is filled by Ser-1169. Zn(2+) contacts are provided by Cys-1175 and His-1179. One can recognise a Helicase ATP-binding domain in the interval 1221–1373 (PAVPQTYQVG…PNIEEVALGH (153 aa)). An ATP-binding site is contributed by 1234–1241 (APTGSGKS). Ser-1241 and Glu-1321 together coordinate Mg(2+). Positions 1320–1323 (DECH) match the DECH box motif. Residues 1490 to 1502 (QRRGRTGRGRLGI) are RNA-binding. The chain crosses the membrane as a helical span at residues 1662 to 1682 (STWVLAGGVLAAVAAYCLATG). Residues 1683–1694 (CVSIIGRIHVNQ) form an NS3-binding region. At 1683–1809 (CVSIIGRIHV…ALTSPLSTST (127 aa)) the chain is on the cytoplasmic side. A helical transmembrane segment spans residues 1810 to 1830 (TILLNIMGGWLASQIAPPAGA). Topologically, residues 1831–1832 (TG) are lumenal. A helical membrane pass occupies residues 1833 to 1853 (FVVSGLVGAAVGSIGLGKILV). Residue Asp-1854 is a topological domain, cytoplasmic. Residues 1855–1875 (VLAGYGAGISGALVAFKIMSG) traverse the membrane as a helical segment. Topologically, residues 1876-1885 (EKPSVEDVVN) are lumenal. The helical transmembrane segment at 1886 to 1906 (LLPAILSPGALVVGVICAAIL) threads the bilayer. The Cytoplasmic segment spans residues 1907–1976 (RRHVGQGEGA…WITEDCPVPC (70 aa)). Cys-1976 is lipidated: S-palmitoyl cysteine; by host. Residues 1977-2006 (SGSWLRDVWDWVCSILIDFKNWLSAKLFPR) lie within the membrane without spanning it. Residues 2007 to 3016 (LPGIPFISCQ…YHSVSRARPR (1010 aa)) are Cytoplasmic-facing. Zn(2+) is bound by residues Cys-2015, Cys-2033, Cys-2035, and Cys-2056. An FKBP8-binding region spans residues 2124-2212 (EFFSWVDGVQ…ASSSASQLSA (89 aa)). The tract at residues 2124–2336 (EFFSWVDGVQ…PVPPPRRRRA (213 aa)) is transcriptional activation. The segment at 2139–2143 (PTPKA) is interaction with non-structural protein 4A. The interval 2193 to 2464 (RLARGSPPSA…ALITPCSPEE (272 aa)) is interaction with host SKP2. Phosphoserine; by host occurs at positions 2198, 2201, 2205, 2208, 2211, and 2214. Positions 2214-2253 (SLRATCTTHAKCPDIDMVDANLFCWCTMGGNMTRIESESK) are ISDR. The segment at 2214–2279 (SLRATCTTHA…REPSIPSEYL (66 aa)) is interaction with EIF2AK2/PKR. An NS4B-binding region spans residues 2253–2310 (KVLMVDSFDPVVDKEDEREPSIPSEYLLPKSRFPPALPPWARPDYNPPLLETWKRPDY). A V3 region spans residues 2303–2381 (ETWKRPDYQP…GTTGETSKSP (79 aa)). An SH3-binding motif is present at residues 2326-2329 (TPVP). A Nuclear localization signal motif is present at residues 2331–2339 (PRRRRAVVL). A Glycyl lysine isopeptide (Lys-Gly) (interchain with G-Cter in ubiquitin) cross-link involves residue Lys-2354. Residues 2354-2434 (KSFGCPPPSG…APGSDSGSWS (81 aa)) form a disordered region. The segment covering 2402–2411 (EPGDPDLEPE) has biased composition (acidic residues). Phosphoserine; by host is present on residues Ser-2475 and Ser-2488. The 119-residue stretch at 2660 to 2778 (PMGFSYDTRC…ISESQGVEED (119 aa)) folds into the RdRp catalytic domain. 3 residues coordinate Mg(2+): Asp-2666, Asp-2764, and Asp-2765. Residues 3017-3037 (LLLLGLLLLCVGVGIFLLPAR) form a helical membrane-spanning segment.

Belongs to the hepacivirus polyprotein family. In terms of assembly, homooligomer. Interacts with E1 (via C-terminus). Interacts with the non-structural protein 5A. Interacts (via N-terminus) with host STAT1 (via SH2 domain); this interaction results in decreased STAT1 phosphorylation and ubiquitin-mediated proteasome-dependent STAT1 degradation, leading to decreased IFN-stimulated gene transcription. Interacts with host STAT3; this interaction constitutively activates STAT3. Interacts with host LTBR receptor. Interacts with host TNFRSF1A receptor and possibly induces apoptosis. Interacts with host HNRPK. Interacts with host YWHAE. Interacts with host UBE3A/E6AP. Interacts with host DDX3X. Interacts with host APOA2. Interacts with host RXRA protein. Interacts with host SP110 isoform 3/Sp110b; this interaction sequesters the transcriptional corepressor SP110 away from the nucleus. Interacts with host CREB3 nuclear transcription protein; this interaction triggers cell transformation. Interacts with host ACY3. Interacts with host C1QR1. Interacts with host RBM24; this interaction, which enhances the interaction of the mature core protein with 5'-UTR, may inhibit viral translation and favor replication. Interacts with host EIF2AK2/PKR; this interaction induces the autophosphorylation of EIF2AK2. Part of the viral assembly initiation complex composed of NS2, E1, E2, NS3, NS4A, NS5A and the mature core protein. Forms a heterodimer with envelope glycoprotein E2. Interacts with mature core protein. Interacts with protease NS2. The heterodimer E1/E2 interacts with host CLDN1; this interaction plays a role in viral entry into host cell. Interacts with host SPSB2 (via C-terminus). Part of the viral assembly initiation complex composed of NS2, E1, E2, NS3, NS4A, NS5A and the mature core protein. Interacts with host NEURL3; this interaction prevents E1 binding to glycoprotein E2. As to quaternary structure, forms a heterodimer with envelope glycoprotein E1. Interacts with host CD81 and SCARB1 receptors; these interactions play a role in viral entry into host cell. Interacts with host EIF2AK2/PKR; this interaction inhibits EIF2AK2 and probably allows the virus to evade the innate immune response. Interacts with host CD209/DC-SIGN and CLEC4M/DC-SIGNR. Interact with host SPCS1; this interaction is essential for viral particle assembly. Interacts with protease NS2. The heterodimer E1/E2 interacts with host CLDN1; this interaction plays a role in viral entry into host cell. Part of the viral assembly initiation complex composed of NS2, E1, E2, NS3, NS4A, NS5A and the mature core protein. Interacts with host SLC3A2/4F2hc; the interaction may facilitate viral entry into host cell. Interacts with human PLSCR1. In terms of assembly, homohexamer. Homoheptamer. Interacts with protease NS2. Homodimer. Interacts with host SPCS1; this interaction is essential for viral particle assembly. Interacts with envelope glycoprotein E1. Interacts with envelope glycoprotein E2. Interacts with viroporin p7. Interacts with serine protease/helicase NS3. Part of the replication complex composed of NS2, NS3, NS4A, NS4B, NS5A and the RNA-directed RNA polymerase embedded in an ER-derived membranous web. Part of the viral assembly initiation complex composed of NS2, E1, E2, NS3, NS4A, NS5A and the mature core protein. As to quaternary structure, interacts with protease NS2. Interacts with non-structural protein 4A; this interaction stabilizes the folding of NS3 serine protease. NS3-NS4A interaction is essential for NS3 activation and allows membrane anchorage of the latter. NS3/NS4A complex also prevents phosphorylation of host IRF3, thus preventing the establishment of dsRNA induced antiviral state. Interacts with host MAVS; this interaction leads to the cleavage and inhibition of host MAVS. Interacts with host TICAM1; this interaction leads to the cleavage and inhibition of host TICAM1. Interacts with host TANK-binding kinase/TBK1; this interaction results in the inhibition of the association between TBK1 and IRF3, which leads to the inhibition of IRF3 activation. Interacts with host RBM24. Part of the replication complex composed of NS2, NS3, NS4A, NS4B, NS5A and the RNA-directed RNA polymerase embedded in an ER-derived membranous web. Part of the viral assembly initiation complex composed of NS2, E1, E2, NS3, NS4A, NS5A and the mature core protein. In terms of assembly, interacts with NS3 serine protease; this interaction stabilizes the folding of NS3 serine protease. NS3-NS4A interaction is essential for NS3 activation and allows membrane anchorage of the latter. Interacts with non-structural protein 5A (via N-terminus). Part of the replication complex composed of NS2, NS3, NS4A, NS4B, NS5A and the RNA-directed RNA polymerase embedded in an ER-derived membranous web. Part of the viral assembly initiation complex composed of NS2, E1, E2, NS3, NS4A, NS5A and the mature core protein. Homomultimer. Interacts with non-structural protein NS5A. Interacts with host PLA2G4C; this interaction likely initiates the recruitment of replication complexes to lipid droplets. Interacts with host STING; this interaction disrupts the interaction between STING and TBK1 thereby suppressing the interferon signaling. Part of the replication complex composed of NS2, NS3, NS4A, NS4B, NS5A and the RNA-directed RNA polymerase embedded in an ER-derived membranous web. As to quaternary structure, monomer. Homodimer; dimerization is required for RNA-binding. Interacts with the mature core protein. Interacts (via N-terminus) with non-structural protein 4A. Interacts with non-structural protein 4B. Interacts (via region D2) with RNA-directed RNA polymerase. Part of the viral assembly initiation complex composed of NS2, E1, E2, NS3, NS4A, NS5A and the mature core protein. Part of the replication complex composed of NS2, NS3, NS4A, NS4B, NS5A and the RNA-directed RNA polymerase embedded in an ER-derived membranous web. Interacts with host GRB2. Interacts with host BIN1. Interacts with host PIK3R1. Interacts with host SRCAP. Interacts with host FKBP8. Interacts (via C-terminus) with host VAPB (via MSP domain). Interacts with host EIF2AK2/PKR; this interaction leads to disruption of EIF2AK2 dimerization by NS5A and probably allows the virus to evade the innate immune response. Interacts (via N-terminus) with host PACSIN2 (via N-terminus); this interaction attenuates protein kinase C alpha-mediated phosphorylation of PACSIN2 by disrupting the interaction between PACSIN2 and PRKCA. Interacts (via N-terminus) with host SRC kinase (via SH2 domain). Interacts with most Src-family kinases. Interacts with host IFI27 and SKP2; promotes the ubiquitin-mediated proteasomal degradation of NS5A. Interacts with host GPS2. Interacts with host TNFRSF21; this interaction allows the modulation by the virus of JNK, p38 MAPK, STAT3, and Akt signaling pathways in a DR6-dependent manner. Interacts (via N-terminus) with host CIDEB (via N-terminus); this interaction seems to regulate the association of HCV particles with APOE. Interacts with host CHKA/Choline Kinase-alpha; CHKA bridges host PI4KA and NS5A and potentiates NS5A-stimulated PI4KA activity, which then facilitates the targeting of the ternary complex to the ER for viral replication. Interacts with host SPSB2 (via C-terminus); this interaction targets NS5A for ubiquitination and degradation. Interacts with host RAB18; this interaction may promote the association of NS5A and other replicase components with lipid droplets. Interacts (via region D2) with host PPIA/CYPA; the interaction stimulates RNA-binding ability of NS5A and is dependent on the peptidyl-prolyl cis-trans isomerase activity of PPIA/CYPA. Interacts with host TRIM14; this interaction induces the degradation of NS5A. In terms of assembly, homooligomer. Interacts with non-structural protein 5A. Interacts with host VAPB. Interacts with host PRK2/PKN2. Interacts with host HNRNPA1 and SEPT6; these interactions facilitate viral replication. Part of the replication complex composed of NS2, NS3, NS4A, NS4B, NS5A and the RNA-directed RNA polymerase. Zn(2+) is required as a cofactor. The cofactor is Mg(2+). Specific enzymatic cleavages in vivo yield mature proteins. The structural proteins, core, E1, E2 and p7 are produced by proteolytic processing by host signal peptidases. The core protein precursor is synthesized as a 23 kDa, which is retained in the ER membrane through the hydrophobic signal peptide. Cleavage by the signal peptidase releases the 21 kDa mature core protein. The cleavage of the core protein precursor occurs between aminoacids 176 and 188 but the exact cleavage site is not known. Some degraded forms of the core protein appear as well during the course of infection. The other proteins (p7, NS2, NS3, NS4A, NS4B, NS5A and NS5B) are cleaved by the viral proteases. Autoprocessing between NS2 and NS3 is mediated by the NS2 cysteine protease catalytic domain and regulated by the NS3 N-terminal domain. Post-translationally, phosphorylated by host PKC and PKA. In terms of processing, ubiquitinated; mediated by UBE3A and leading to core protein subsequent proteasomal degradation. Highly N-glycosylated. Post-translationally, palmitoylation is required for NS2/3 autoprocessing and E2 recruitment to membranes. In terms of processing, palmitoylated. This modification may play a role in its polymerization or in protein-protein interactions. Phosphorylated on serines in a basal form termed p56. p58 is a hyperphosphorylated form of p56. p56 and p58 coexist in the cell in roughly equivalent amounts. Hyperphosphorylation is dependent on the presence of NS4A. Host CSNK1A1/CKI-alpha or RPS6KB1 kinases may be responsible for NS5A phosphorylation. Post-translationally, tyrosine phosphorylation is essential for the interaction with host SRC. In terms of processing, the N-terminus is phosphorylated by host PRK2/PKN2.

The protein localises to the host endoplasmic reticulum membrane. It localises to the host mitochondrion membrane. The protein resides in the virion. It is found in the host cytoplasm. Its subcellular location is the host nucleus. The protein localises to the host lipid droplet. It localises to the virion membrane. The protein resides in the host mitochondrion. It is found in the host cell membrane. Its subcellular location is the host perinuclear region. The enzyme catalyses Hydrolysis of four peptide bonds in the viral precursor polyprotein, commonly with Asp or Glu in the P6 position, Cys or Thr in P1 and Ser or Ala in P1'.. The catalysed reaction is a ribonucleoside 5'-triphosphate + H2O = a ribonucleoside 5'-diphosphate + phosphate + H(+). It carries out the reaction ATP + H2O = ADP + phosphate + H(+). It catalyses the reaction RNA(n) + a ribonucleoside 5'-triphosphate = RNA(n+1) + diphosphate. Inhibited by the antiviral drug hexamethylene amiloride. Inhibition by amantadine appears to be genotype-dependent. Also inhibited by long-alkyl-chain iminosugar derivatives. Its activity is regulated as follows. Activity is up-regulated by PRK2/PKN2-mediated phosphorylation. Functionally, packages viral RNA to form a viral nucleocapsid, and promotes virion budding. Participates in the viral particle production as a result of its interaction with the non-structural protein 5A. Binds RNA and may function as a RNA chaperone to induce the RNA structural rearrangements taking place during virus replication. Modulates viral translation initiation by interacting with viral IRES and 40S ribosomal subunit. Affects various cell signaling pathways, host immunity and lipid metabolism. Prevents the establishment of cellular antiviral state by blocking the interferon-alpha/beta (IFN-alpha/beta) and IFN-gamma signaling pathways and by blocking the formation of phosphorylated STAT1 and promoting ubiquitin-mediated proteasome-dependent degradation of STAT1. Activates STAT3 leading to cellular transformation. Regulates the activity of cellular genes, including c-myc and c-fos. May repress the promoter of p53, and sequester CREB3 and SP110 isoform 3/Sp110b in the cytoplasm. Represses cell cycle negative regulating factor CDKN1A, thereby interrupting an important check point of normal cell cycle regulation. Targets transcription factors involved in the regulation of inflammatory responses and in the immune response: suppresses TNF-induced NF-kappa-B activation, and activates AP-1. Binds to dendritic cells (DCs) via C1QR1, resulting in down-regulation of T-lymphocytes proliferation. Alters lipid metabolism by interacting with hepatocellular proteins involved in lipid accumulation and storage. Induces up-regulation of FAS promoter activity, and thereby contributes to the increased triglyceride accumulation in hepatocytes (steatosis). In terms of biological role, forms a heterodimer with envelope glycoprotein E2, which mediates virus attachment to the host cell, virion internalization through clathrin-dependent endocytosis and fusion with host membrane. Fusion with the host cell is most likely mediated by both E1 and E2, through conformational rearrangements of the heterodimer required for fusion rather than a classical class II fusion mechanism. E1/E2 heterodimer binds host apolipoproteins such as APOB and ApoE thereby forming a lipo-viro-particle (LVP). APOE associated to the LVP allows the initial virus attachment to cell surface receptors such as the heparan sulfate proteoglycans (HSPGs), syndecan-1 (SDC1), syndecan-1 (SDC2), the low-density lipoprotein receptor (LDLR) and scavenger receptor class B type I (SCARB1). The cholesterol transfer activity of SCARB1 allows E2 exposure and binding of E2 to SCARB1 and the tetraspanin CD81. E1/E2 heterodimer binding on CD81 activates the epithelial growth factor receptor (EGFR) signaling pathway. Diffusion of the complex E1-E2-EGFR-SCARB1-CD81 to the cell lateral membrane allows further interaction with Claudin 1 (CLDN1) and occludin (OCLN) to finally trigger HCV entry. Its function is as follows. Forms a heterodimer with envelope glycoprotein E1, which mediates virus attachment to the host cell, virion internalization through clathrin-dependent endocytosis and fusion with host membrane. Fusion with the host cell is most likely mediated by both E1 and E2, through conformational rearrangements of the heterodimer required for fusion rather than a classical class II fusion mechanism. The interaction between envelope glycoprotein E2 and host apolipoprotein E/APOE allows the proper assembly, maturation and infectivity of the viral particles. This interaction is probably promoted via the up-regulation of cellular autophagy by the virus. E1/E2 heterodimer binds host apolipoproteins such as APOB and APOE thereby forming a lipo-viro-particle (LVP). APOE associated to the LVP allows the initial virus attachment to cell surface receptors such as the heparan sulfate proteoglycans (HSPGs), syndecan-1 (SDC1), syndecan-1 (SDC2), the low-density lipoprotein receptor (LDLR) and scavenger receptor class B type I (SCARB1). The cholesterol transfer activity of SCARB1 allows E2 exposure and binding of E2 to SCARB1 and the tetraspanin CD81. E1/E2 heterodimer binding on CD81 activates the epithelial growth factor receptor (EGFR) signaling pathway. Diffusion of the complex E1-E2-EGFR-SCARB1-CD81 to the cell lateral membrane allows further interaction with Claudin 1 (CLDN1) and occludin (OCLN) to finally trigger HCV entry. Inhibits host EIF2AK2/PKR activation, preventing the establishment of an antiviral state. Viral ligand for CD209/DC-SIGN and CLEC4M/DC-SIGNR, which are respectively found on dendritic cells (DCs), and on liver sinusoidal endothelial cells and macrophage-like cells of lymph node sinuses. These interactions allow the capture of circulating HCV particles by these cells and subsequent facilitated transmission to permissive cells such as hepatocytes and lymphocyte subpopulations. The interaction between E2 and host amino acid transporter complex formed by SLC3A2 and SLC7A5/LAT1 may facilitate viral entry into host cell. Ion channel protein that acts as a viroporin and plays an essential role in the assembly, envelopment and secretion of viral particles. Regulates the host cell secretory pathway, which induces the intracellular retention of viral glycoproteins and favors assembly of viral particles. Creates a pore in acidic organelles and releases Ca(2+) and H(+) in the cytoplasm of infected cells, leading to a productive viral infection. High levels of cytoplasmic Ca(2+) may trigger membrane trafficking and transport of viral ER-associated proteins to viroplasms, sites of viral genome replication. This ionic imbalance induces the assembly of the inflammasome complex, which triggers the maturation of pro-IL-1beta into IL-1beta through the action of caspase-1. Targets also host mitochondria and induces mitochondrial depolarization. In addition of its role as a viroporin, acts as a lipid raft adhesion factor. Functionally, cysteine protease required for the proteolytic auto-cleavage between the non-structural proteins NS2 and NS3. The N-terminus of NS3 is required for the function of NS2 protease (active region NS2-3). Promotes the initiation of viral particle assembly by mediating the interaction between structural and non-structural proteins. In terms of biological role, displays three enzymatic activities: serine protease with a chymotrypsin-like fold, NTPase and RNA helicase. NS3 serine protease, in association with NS4A, is responsible for the cleavages of NS3-NS4A, NS4A-NS4B, NS4B-NS5A and NS5A-NS5B. The NS3/NS4A complex prevents phosphorylation of host IRF3, thus preventing the establishment of dsRNA induced antiviral state. The NS3/NS4A complex induces host amino acid transporter component SLC3A2, thus contributing to HCV propagation. NS3 RNA helicase binds to RNA and unwinds both dsDNA and dsRNA in the 3' to 5' direction, and likely resolves RNA complicated stable secondary structures in the template strand. Binds a single ATP and catalyzes the unzipping of a single base pair of dsRNA. Inhibits host antiviral proteins TBK1 and IRF3 thereby preventing the establishment of an antiviral state. Cleaves host MAVS/CARDIF thereby preventing the establishment of an antiviral state. Cleaves host TICAM1/TRIF, thereby disrupting TLR3 signaling and preventing the establishment of an antiviral state. Its function is as follows. Induces a specific membrane alteration that serves as a scaffold for the virus replication complex. This membrane alteration gives rise to the so-called ER-derived membranous web that contains the replication complex. NS4B self-interaction contributes to its function in membranous web formation. Promotes host TRIF protein degradation in a CASP8-dependent manner thereby inhibiting host TLR3-mediated interferon signaling. Disrupts the interaction between STING and TBK1 contributing to the inhibition of interferon signaling. Phosphorylated protein that is indispensable for viral replication and assembly. Both hypo- and hyperphosphorylated states are required for the viral life cycle. The hyperphosphorylated form of NS5A is an inhibitor of viral replication. Involved in RNA-binding and especially in binding to the viral genome. Zinc is essential for RNA-binding. Participates in the viral particle production as a result of its interaction with the mature viral core protein. Its interaction with host VAPB may target the viral replication complex to vesicles. Down-regulates viral IRES translation initiation. Mediates interferon resistance, presumably by interacting with and inhibiting host EIF2AK2/PKR. Prevents BIN1-induced apoptosis. Acts as a transcriptional activator of some host genes important for viral replication when localized in the nucleus. Via the interaction with host PACSIN2, modulates lipid droplet formation in order to promote virion assembly. Modulates TNFRSF21/DR6 signaling pathway for viral propagation. Functionally, RNA-dependent RNA polymerase that performs primer-template recognition and RNA synthesis during viral replication. Initiates RNA transcription/replication at a flavin adenine dinucleotide (FAD), resulting in a 5'- FAD cap on viral RNAs. In this way, recognition of viral 5' RNA by host pattern recognition receptors can be bypassed, thereby evading activation of antiviral pathways. This is Genome polyprotein from Hepatitis C virus genotype 2c (isolate BEBE1) (HCV).